The following is a 129-amino-acid chain: Small ribosomal subunit protein uS11 (129 aa).

It belongs to the universal ribosomal protein uS11 family. Part of the 30S ribosomal subunit. Interacts with proteins S7 and S18. Binds to IF-3.

Located on the platform of the 30S subunit, it bridges several disparate RNA helices of the 16S rRNA. Forms part of the Shine-Dalgarno cleft in the 70S ribosome. The chain is Small ribosomal subunit protein uS11 from Actinobacillus succinogenes (strain ATCC 55618 / DSM 22257 / CCUG 43843 / 130Z).